A 148-amino-acid chain; its full sequence is Ribosomal RNA large subunit methyltransferase H 2 (148 aa).

Residues leucine 74, glycine 106, and 125-130 each bind S-adenosyl-L-methionine; that span reads FSKMTF.

It belongs to the RNA methyltransferase RlmH family. As to quaternary structure, homodimer.

The protein resides in the cytoplasm. It catalyses the reaction pseudouridine(1915) in 23S rRNA + S-adenosyl-L-methionine = N(3)-methylpseudouridine(1915) in 23S rRNA + S-adenosyl-L-homocysteine + H(+). In terms of biological role, specifically methylates the pseudouridine at position 1915 (m3Psi1915) in 23S rRNA. This Caldanaerobacter subterraneus subsp. tengcongensis (strain DSM 15242 / JCM 11007 / NBRC 100824 / MB4) (Thermoanaerobacter tengcongensis) protein is Ribosomal RNA large subunit methyltransferase H 2.